The sequence spans 62 residues: Small ribosomal subunit protein eS27 (62 aa).

The Zn(2+) site is built by C17, C20, C36, and C39. Residues 17-39 (CPECNNEQIVFGSPATVVKCLTC) form a C4-type zinc finger.

The protein belongs to the eukaryotic ribosomal protein eS27 family. Part of the 30S ribosomal subunit. Zn(2+) is required as a cofactor.

The protein is Small ribosomal subunit protein eS27 of Methanocaldococcus jannaschii (strain ATCC 43067 / DSM 2661 / JAL-1 / JCM 10045 / NBRC 100440) (Methanococcus jannaschii).